The primary structure comprises 122 residues: Large ribosomal subunit protein uL14 (122 aa).

Belongs to the universal ribosomal protein uL14 family. Part of the 50S ribosomal subunit. Forms a cluster with proteins L3 and L19. In the 70S ribosome, L14 and L19 interact and together make contacts with the 16S rRNA in bridges B5 and B8.

In terms of biological role, binds to 23S rRNA. Forms part of two intersubunit bridges in the 70S ribosome. The protein is Large ribosomal subunit protein uL14 of Albidiferax ferrireducens (strain ATCC BAA-621 / DSM 15236 / T118) (Rhodoferax ferrireducens).